A 151-amino-acid polypeptide reads, in one-letter code: 3-hydroxyacyl-[acyl-carrier-protein] dehydratase FabZ (151 aa).

The active site involves H54.

This sequence belongs to the thioester dehydratase family. FabZ subfamily. Oligomer. Post-translationally, the N-terminus is blocked.

It localises to the cytoplasm. The enzyme catalyses a (3R)-hydroxyacyl-[ACP] = a (2E)-enoyl-[ACP] + H2O. Functionally, involved in unsaturated fatty acids biosynthesis. Catalyzes the dehydration of short chain beta-hydroxyacyl-ACPs and long chain saturated and unsaturated beta-hydroxyacyl-ACPs. The chain is 3-hydroxyacyl-[acyl-carrier-protein] dehydratase FabZ from Escherichia coli (strain SE11).